Here is a 409-residue protein sequence, read N- to C-terminus: MARAKFERTKPHVNVGTIGHVDHGKTTLTAAITMTLAALGQATAKRYDEIDAAPEERARGITINTAHVEYQTEKRHYAHVDCPGHADYVKNMITGAAQMDGAILVVSAADGPMPQTREHILLARQVGVPSLVVFLNKVDMVDDEELLELVELEIRELLSKYDFPGDEIPIIRGSALKALERMQANPKTQRGEDPWVDKIYELMDAVDSYIPTPERDVDKPFLMAVEDVFSITGRGTVATGRIERGRIKVGETVELVGLRETRSTTVTGLEMFQKTLDEGIAGDNVGVLLRGIQKNEVERGMVLAKPKTITPHTQFESEVYVLKKEEGGRHTPFFAGYRPQFYVRTTDVTGTITSFTADDGSKPEMVMPGDRVRMTVELIQPIAIEQGMRFAIREGGRTVGAGVVSKILK.

A tr-type G domain is found at 10-214 (KPHVNVGTIG…AVDSYIPTPE (205 aa)). Residues 19 to 26 (GHVDHGKT) form a G1 region. 19 to 26 (GHVDHGKT) provides a ligand contact to GTP. Residue Thr26 participates in Mg(2+) binding. The tract at residues 60–64 (GITIN) is G2. Positions 81-84 (DCPG) are G3. GTP contacts are provided by residues 81–85 (DCPGH) and 136–139 (NKVD). Residues 136–139 (NKVD) are G4. The interval 174-176 (SAL) is G5.

It belongs to the TRAFAC class translation factor GTPase superfamily. Classic translation factor GTPase family. EF-Tu/EF-1A subfamily. Monomer.

The protein localises to the cytoplasm. It catalyses the reaction GTP + H2O = GDP + phosphate + H(+). Functionally, GTP hydrolase that promotes the GTP-dependent binding of aminoacyl-tRNA to the A-site of ribosomes during protein biosynthesis. The sequence is that of Elongation factor Tu from Synechococcus sp. (strain JA-3-3Ab) (Cyanobacteria bacterium Yellowstone A-Prime).